Here is a 929-residue protein sequence, read N- to C-terminus: Bifunctional glutamine synthetase adenylyltransferase/adenylyl-removing enzyme (929 aa).

Residues 1–422 (MTTPISTSRA…TRHFEQIFAV (422 aa)) form an adenylyl removase region. An adenylyl transferase region spans residues 429–929 (LGTFARIRPE…FQLWEDVFGT (501 aa)).

The protein belongs to the GlnE family. The cofactor is Mg(2+).

It carries out the reaction [glutamine synthetase]-O(4)-(5'-adenylyl)-L-tyrosine + phosphate = [glutamine synthetase]-L-tyrosine + ADP. The catalysed reaction is [glutamine synthetase]-L-tyrosine + ATP = [glutamine synthetase]-O(4)-(5'-adenylyl)-L-tyrosine + diphosphate. Its function is as follows. Involved in the regulation of glutamine synthetase GlnA, a key enzyme in the process to assimilate ammonia. When cellular nitrogen levels are high, the C-terminal adenylyl transferase (AT) inactivates GlnA by covalent transfer of an adenylyl group from ATP to specific tyrosine residue of GlnA, thus reducing its activity. Conversely, when nitrogen levels are low, the N-terminal adenylyl removase (AR) activates GlnA by removing the adenylyl group by phosphorolysis, increasing its activity. The regulatory region of GlnE binds the signal transduction protein PII (GlnB) which indicates the nitrogen status of the cell. This chain is Bifunctional glutamine synthetase adenylyltransferase/adenylyl-removing enzyme, found in Nitrosomonas eutropha (strain DSM 101675 / C91 / Nm57).